Reading from the N-terminus, the 161-residue chain is MSIVTKSIVNADAEARYLSPGELDRIKSFVLSGQRRLNIAQILTDNRENIVKQGGQQLFQKRTDIVSPGGNAYGEEMTATCLRDLDYYLRLVTYGIVAGDVTPIEEIGLVGVKEMYNSLGTPISGVAEGVRCMKAIACSLLSGEDSAEAGFYFDYTLGAMQ.

Position 71 is an N4-methylasparagine (asparagine 71). Cysteine 81 is a binding site for (2R,3E)-phycocyanobilin.

The protein belongs to the phycobiliprotein family. Heterodimer of an alpha and a beta chain. In terms of processing, contains one covalently linked phycocyanobilin chromophore.

Its subcellular location is the plastid. It is found in the chloroplast thylakoid membrane. Light-harvesting photosynthetic bile pigment-protein from the phycobiliprotein complex. Allophycocyanin has a maximum absorption at approximately 650 nanometers. This is Allophycocyanin alpha chain (apcA) from Aglaothamnion neglectum (Red alga).